The sequence spans 303 residues: Kanosamine kinase (303 aa).

Belongs to the ROK (NagC/XylR) family.

The catalysed reaction is kanosamine + ATP = D-kanosamine 6-phosphate + ADP + H(+). Its pathway is antibiotic biosynthesis; rifamycin B biosynthesis. With respect to regulation, inhibited by Zn(2+), Cu(2+), and Fe(2+). Involved in the biosynthesis of 3-amino-5-hydroxybenzoate (AHBA), a compound that then serves as the starter unit for the assembly of a polyketide during the biosynthesis of rifamycin B and other ansamycin antibiotics. Catalyzes only the phosphorylation of kanosamine to yield kanosamine 6-phosphate. The sequence is that of Kanosamine kinase (rifN) from Amycolatopsis mediterranei (strain S699) (Nocardia mediterranei).